A 338-amino-acid polypeptide reads, in one-letter code: Calcium uniporter protein 4, mitochondrial (338 aa).

The N-terminal 36 residues, 1–36 (MVMMKKLLSNRLFNMSKTASQSLMNCRTSSSSSLAM), are a transit peptide targeting the mitochondrion. A helical membrane pass occupies residues 233–253 (LWAGLGYLIIQTAGFMRLTFW). Residues 257–265 (WDVMEPICF) carry the Selectivity filter motif. Glutamate 261 provides a ligand contact to Ca(2+). The helical transmembrane segment at 263 to 280 (ICFYVSSVYFMAGYTFFL) threads the bilayer.

Belongs to the MCU (TC 1.A.77) family.

Its subcellular location is the mitochondrion inner membrane. The enzyme catalyses Ca(2+)(in) = Ca(2+)(out). Mitochondrial inner membrane calcium uniporter that mediates calcium uptake into mitochondria. Constitutes a pore-forming and calcium-conducting subunit. Mitochondrial calcium homeostasis plays key roles in cellular physiology and regulates cell bioenergetics, cytoplasmic calcium signals and activation of cell death pathways. The sequence is that of Calcium uniporter protein 4, mitochondrial from Arabidopsis thaliana (Mouse-ear cress).